The following is a 556-amino-acid chain: Urocanate hydratase (556 aa).

NAD(+)-binding positions include 52–53 (GG), Q130, 176–178 (GMG), E196, R201, 242–243 (NA), 263–267 (QTSAH), 273–274 (YL), and Y322. C410 is an active-site residue. An NAD(+)-binding site is contributed by G492.

It belongs to the urocanase family. The cofactor is NAD(+).

It is found in the cytoplasm. The catalysed reaction is 4-imidazolone-5-propanoate = trans-urocanate + H2O. Its pathway is amino-acid degradation; L-histidine degradation into L-glutamate; N-formimidoyl-L-glutamate from L-histidine: step 2/3. In terms of biological role, catalyzes the conversion of urocanate to 4-imidazolone-5-propionate. This is Urocanate hydratase from Bradyrhizobium sp. (strain ORS 278).